The following is a 326-amino-acid chain: Porphobilinogen deaminase (326 aa).

At cysteine 251 the chain carries S-(dipyrrolylmethanemethyl)cysteine.

It belongs to the HMBS family. Requires dipyrromethane as cofactor.

The catalysed reaction is 4 porphobilinogen + H2O = hydroxymethylbilane + 4 NH4(+). The protein operates within porphyrin-containing compound metabolism; protoporphyrin-IX biosynthesis; coproporphyrinogen-III from 5-aminolevulinate: step 2/4. In terms of biological role, tetrapolymerization of the monopyrrole PBG into the hydroxymethylbilane pre-uroporphyrinogen in several discrete steps. The chain is Porphobilinogen deaminase (HEM3) from Eremothecium gossypii (strain ATCC 10895 / CBS 109.51 / FGSC 9923 / NRRL Y-1056) (Yeast).